The following is a 457-amino-acid chain: Argininosuccinate lyase (457 aa).

It belongs to the lyase 1 family. Argininosuccinate lyase subfamily.

It is found in the cytoplasm. The enzyme catalyses 2-(N(omega)-L-arginino)succinate = fumarate + L-arginine. It functions in the pathway amino-acid biosynthesis; L-arginine biosynthesis; L-arginine from L-ornithine and carbamoyl phosphate: step 3/3. The polypeptide is Argininosuccinate lyase (Shigella flexneri serotype 5b (strain 8401)).